Reading from the N-terminus, the 138-residue chain is Cell division protein SepF (138 aa).

Residues methionine 1–proline 59 form a disordered region. Polar residues predominate over residues methionine 33–valine 48.

This sequence belongs to the SepF family. As to quaternary structure, homodimer. Interacts with FtsZ.

It localises to the cytoplasm. In terms of biological role, cell division protein that is part of the divisome complex and is recruited early to the Z-ring. Probably stimulates Z-ring formation, perhaps through the cross-linking of FtsZ protofilaments. Its function overlaps with FtsA. This chain is Cell division protein SepF, found in Lactobacillus delbrueckii subsp. bulgaricus (strain ATCC 11842 / DSM 20081 / BCRC 10696 / JCM 1002 / NBRC 13953 / NCIMB 11778 / NCTC 12712 / WDCM 00102 / Lb 14).